A 1304-amino-acid chain; its full sequence is TPR-containing protein DDB_G0280363 (1304 aa).

6 disordered regions span residues 19-85, 153-195, 296-334, 447-477, 576-687, and 706-728; these read QQHH…HPQQ, NINN…NSSL, LPSTNSSIVSRQQQLQQQQQKLKLKSSPSPISPFFYTQQ, GFNWSPSLQPDQSTSTNHTQAMLQQQQQRQQ, QNQQ…VTTI, and LTTVNHSKPPPNESKRGELVESP. Low complexity-rich tracts occupy residues 25–44, 52–85, and 153–194; these read QQNNTQVQQQQQQHTTQFNQ, HQQHQQQQHHQQQHHQQQQQQQQQQQQQQQHPQQ, and NINN…NNSS. Over residues 296–306 the composition is skewed to polar residues; the sequence is LPSTNSSIVSR. Low complexity predominate over residues 307 to 316; it reads QQQLQQQQQK. Polar residues predominate over residues 448-465; that stretch reads FNWSPSLQPDQSTSTNHT. Low complexity-rich tracts occupy residues 466 to 477 and 576 to 597; these read QAMLQQQQQRQQ and QNQQQNQQQNQQQNQQHYPNQH. A compositionally biased stretch (basic residues) spans 598 to 625; that stretch reads HGQHQHNQHNQHHNQHHNQSHPNHKNQH. Residues 626–687 are compositionally biased toward low complexity; that stretch reads QKQNQTQQST…NNNTNNVTTI (62 aa). TPR repeat units follow at residues 769 to 802, 899 to 932, 978 to 1011, 1046 to 1079, 1084 to 1111, 1112 to 1150, and 1152 to 1184; these read WRVYLELADLANRQNNLKLARKFYRKVTSTQPYI, MKHVPWYGPIYQEAYKLEERCEEYERAINIVEKG, WKIYFEAAQIEERSKNLTLSRAAYVKSVELCPEN, SKLRSLVLLEYSRLEEYAGNINKSRRILKMAHVE, WKVFLESVLLEMRANNYEAAIKEAKESL, KIHSGAGRLWAALIQLNQLKGVKSQLNVFKKALQFVPKS, and EVWCEGARIALNNNELREARRFLEFAIQFTPQF.

This chain is TPR-containing protein DDB_G0280363, found in Dictyostelium discoideum (Social amoeba).